Here is a 495-residue protein sequence, read N- to C-terminus: Potassium voltage-gated channel subfamily A member 1 (495 aa).

Positions 1-30 are disordered; the sequence is MTVMSGENVDEASAAPGHPQDGSYPRQADH. The tract at residues 1-128 is tetramerization domain; that stretch reads MTVMSGENVD…FYELGEEAME (128 aa). Over 1–164 the chain is Cytoplasmic; the sequence is MTVMSGENVD…LLFEYPESSG (164 aa). Ser-23 is modified (phosphoserine). A helical transmembrane segment spans residues 165-186; that stretch reads PARVIAIVSVMVILISIVIFCL. The Extracellular segment spans residues 187 to 220; that stretch reads ETLPELKDDKDFTGTVHRIDNTTVIYNSNIFTDP. Residue Asn-207 is glycosylated (N-linked (GlcNAc...) asparagine). A helical membrane pass occupies residues 221–242; that stretch reads FFIVETLCIIWFSFELVVRFFA. Residue Cys-243 is the site of S-palmitoyl cysteine attachment. At 243 to 253 the chain is on the cytoplasmic side; it reads CPSKTDFFKNI. A helical transmembrane segment spans residues 254–274; sequence MNFIDIVAIIPYFITLGTEIA. Topologically, residues 275-287 are extracellular; the sequence is EQEGNQKGEQATS. The chain crosses the membrane as a helical; Voltage-sensor span at residues 288 to 308; that stretch reads LAILRVIRLVRVFRIFKLSRH. Topologically, residues 309-323 are cytoplasmic; it reads SKGLQILGQTLKASM. Positions 310 to 323 are S4-S5 linker; the sequence is KGLQILGQTLKASM. A Phosphoserine; by PKA modification is found at Ser-322. A helical membrane pass occupies residues 324 to 345; it reads RELGLLIFFLFIGVILFSSAVY. At 346–359 the chain is on the extracellular side; it reads FAEAEEAESHFSSI. The helical intramembrane region spans 360-371; that stretch reads PDAFWWAVVSMT. A Selectivity filter motif is present at residues 372 to 377; it reads TVGYGD. The stretch at 372–379 is an intramembrane region; it reads TVGYGDMY. Residues 380-386 lie on the Extracellular side of the membrane; it reads PVTIGGK. Residues 387 to 415 traverse the membrane as a helical segment; it reads IVGSLCAIAGVLTIALPVPVIVSNFNYFY. Residues 416–495 are Cytoplasmic-facing; the sequence is HRETEGEEQA…VNKSKLLTDV (80 aa). A phosphoserine mark is found at Ser-437 and Ser-439. Ser-446 carries the post-translational modification Phosphoserine; by PKA. The PDZ-binding motif lies at 493–495; it reads TDV.

The protein belongs to the potassium channel family. A (Shaker) (TC 1.A.1.2) subfamily. Kv1.1/KCNA1 sub-subfamily. As to quaternary structure, homotetramer and heterotetramer with other channel-forming alpha subunits, such as KCNA2, KCNA4, KCNA5, KCNA6 and KCNA7. Channel activity is regulated by interaction with the beta subunits KCNAB1 and KCNAB2. Identified in a complex with KCNA2 and KCNAB2. Interacts (via C-terminus) with the PDZ domains of DLG1, DLG2 and DLG4. Interacts with LGI1 within a complex containing LGI1, KCNA4 and KCNAB1. Interacts (via N-terminus) with STX1A; this promotes channel inactivation. Interacts (via N-terminus) with the heterodimer formed by GNB1 and GNG2; this promotes channel inactivation. Can interact simultaneously with STX1A and the heterodimer formed by GNB1 and GNG2. Interacts (via cytoplasmic N-terminal domain) with KCNRG; this inhibits channel activity. Interacts with ANK3; this inhibits channel activity. Interacts with ADAM11. In terms of processing, N-glycosylated. Post-translationally, palmitoylated on Cys-243; which may be required for membrane targeting. Phosphorylated on tyrosine residues. Phosphorylation increases in response to NRG1; this inhibits channel activity. Phosphorylation at Ser-446 regulates channel activity by down-regulating expression at the cell membrane. As to expression, detected adjacent to nodes of Ranvier in juxtaparanodal zones in spinal cord nerve fibers, but also in paranodal regions in some myelinated spinal cord axons (at protein level). Detected in the islet of Langerhans.

It is found in the cell membrane. Its subcellular location is the membrane. The protein localises to the cell projection. It localises to the axon. The protein resides in the cytoplasmic vesicle. It is found in the perikaryon. Its subcellular location is the endoplasmic reticulum. The protein localises to the dendrite. It localises to the cell junction. The protein resides in the synapse. It is found in the presynaptic cell membrane. Its subcellular location is the presynapse. It catalyses the reaction K(+)(in) = K(+)(out). Inhibited by 1.1 mM 4-aminopyridine (4-AP) and by 20 mM tetraethylammonium (TEA), but not by charybdotoxin (CTX). Inhibited by dendrotoxin (DTX). Voltage-gated potassium channel that mediates transmembrane potassium transport in excitable membranes, primarily in the brain and the central nervous system, but also in the kidney. Contributes to the regulation of the membrane potential and nerve signaling, and prevents neuronal hyperexcitability. Forms tetrameric potassium-selective channels through which potassium ions pass in accordance with their electrochemical gradient. The channel alternates between opened and closed conformations in response to the voltage difference across the membrane. Can form functional homotetrameric channels and heterotetrameric channels that contain variable proportions of KCNA1, KCNA2, KCNA4, KCNA5, KCNA6, KCNA7, and possibly other family members as well; channel properties depend on the type of alpha subunits that are part of the channel. Channel properties are modulated by cytoplasmic beta subunits that regulate the subcellular location of the alpha subunits and promote rapid inactivation of delayed rectifier potassium channels. In vivo, membranes probably contain a mixture of heteromeric potassium channel complexes, making it difficult to assign currents observed in intact tissues to any particular potassium channel family member. Homotetrameric KCNA1 forms a delayed-rectifier potassium channel that opens in response to membrane depolarization, followed by slow spontaneous channel closure. In contrast, a heterotetrameric channel formed by KCNA1 and KCNA4 shows rapid inactivation. Regulates neuronal excitability in hippocampus, especially in mossy fibers and medial perforant path axons, preventing neuronal hyperexcitability. Response to toxins that are selective for KCNA1, respectively for KCNA2, suggests that heteromeric potassium channels composed of both KCNA1 and KCNA2 play a role in pacemaking and regulate the output of deep cerebellar nuclear neurons. May function as down-stream effector for G protein-coupled receptors and inhibit GABAergic inputs to basolateral amygdala neurons. May contribute to the regulation of neurotransmitter release, such as gamma-aminobutyric acid (GABA) release. Plays a role in regulating the generation of action potentials and preventing hyperexcitability in myelinated axons of the vagus nerve, and thereby contributes to the regulation of heart contraction. Required for normal neuromuscular responses. Regulates the frequency of neuronal action potential firing in response to mechanical stimuli, and plays a role in the perception of pain caused by mechanical stimuli, but does not play a role in the perception of pain due to heat stimuli. Required for normal responses to auditory stimuli and precise location of sound sources, but not for sound perception. The use of toxins that block specific channels suggest that it contributes to the regulation of the axonal release of the neurotransmitter dopamine. Required for normal postnatal brain development and normal proliferation of neuronal precursor cells in the brain. Plays a role in the reabsorption of Mg(2+) in the distal convoluted tubules in the kidney and in magnesium ion homeostasis, probably via its effect on the membrane potential. This Homo sapiens (Human) protein is Potassium voltage-gated channel subfamily A member 1.